The primary structure comprises 66 residues: DNA-directed RNA polymerase subunit Rpo10 (66 aa).

4 residues coordinate Zn(2+): cysteine 7, cysteine 10, cysteine 44, and cysteine 45.

This sequence belongs to the archaeal Rpo10/eukaryotic RPB10 RNA polymerase subunit family. Part of the 13-subunit RNA polymerase complex. The cofactor is Zn(2+).

It localises to the cytoplasm. The catalysed reaction is RNA(n) + a ribonucleoside 5'-triphosphate = RNA(n+1) + diphosphate. Its function is as follows. DNA-dependent RNA polymerase (RNAP) catalyzes the transcription of DNA into RNA using the four ribonucleoside triphosphates as substrates. This chain is DNA-directed RNA polymerase subunit Rpo10, found in Sulfolobus acidocaldarius (strain ATCC 33909 / DSM 639 / JCM 8929 / NBRC 15157 / NCIMB 11770).